The primary structure comprises 147 residues: Large ribosomal subunit protein uL13 (147 aa).

It belongs to the universal ribosomal protein uL13 family. In terms of assembly, part of the 50S ribosomal subunit.

This protein is one of the early assembly proteins of the 50S ribosomal subunit, although it is not seen to bind rRNA by itself. It is important during the early stages of 50S assembly. This Arthrobacter sp. (strain FB24) protein is Large ribosomal subunit protein uL13.